Reading from the N-terminus, the 318-residue chain is uncharacterized protein (318 aa).

The protein to A.aeolicus AA07 and AA34.

This is an uncharacterized protein from Aquifex aeolicus (strain VF5).